The sequence spans 217 residues: Large ribosomal subunit protein uL1 (217 aa).

Ser2 bears the N-acetylserine mark. Tyr11 is subject to Phosphotyrosine. N6-acetyllysine occurs at positions 91 and 106. Position 118 is an N6-acetyllysine; alternate (Lys118). Lys118 is covalently cross-linked (Glycyl lysine isopeptide (Lys-Gly) (interchain with G-Cter in SUMO1); alternate). Residue Lys118 forms a Glycyl lysine isopeptide (Lys-Gly) (interchain with G-Cter in SUMO2); alternate linkage. Residue Lys161 forms a Glycyl lysine isopeptide (Lys-Gly) (interchain with G-Cter in SUMO2) linkage.

It belongs to the universal ribosomal protein uL1 family. Component of the large ribosomal subunit.

It is found in the cytoplasm. Component of the large ribosomal subunit. The ribosome is a large ribonucleoprotein complex responsible for the synthesis of proteins in the cell. This Bos taurus (Bovine) protein is Large ribosomal subunit protein uL1 (RPL10A).